The chain runs to 295 residues: ATP synthase gamma chain (295 aa).

It belongs to the ATPase gamma chain family. F-type ATPases have 2 components, CF(1) - the catalytic core - and CF(0) - the membrane proton channel. CF(1) has five subunits: alpha(3), beta(3), gamma(1), delta(1), epsilon(1). CF(0) has three main subunits: a, b and c.

Its subcellular location is the cell inner membrane. Produces ATP from ADP in the presence of a proton gradient across the membrane. The gamma chain is believed to be important in regulating ATPase activity and the flow of protons through the CF(0) complex. The polypeptide is ATP synthase gamma chain (Sulfurimonas denitrificans (strain ATCC 33889 / DSM 1251) (Thiomicrospira denitrificans (strain ATCC 33889 / DSM 1251))).